Consider the following 261-residue polypeptide: tRNA pseudouridine synthase A (261 aa).

Catalysis depends on Asp51, which acts as the Nucleophile. Position 109 (Tyr109) interacts with substrate.

It belongs to the tRNA pseudouridine synthase TruA family. Homodimer.

The catalysed reaction is uridine(38/39/40) in tRNA = pseudouridine(38/39/40) in tRNA. In terms of biological role, formation of pseudouridine at positions 38, 39 and 40 in the anticodon stem and loop of transfer RNAs. The sequence is that of tRNA pseudouridine synthase A from Idiomarina loihiensis (strain ATCC BAA-735 / DSM 15497 / L2-TR).